The chain runs to 381 residues: Probable tRNA sulfurtransferase (381 aa).

The THUMP domain maps to 57 to 160 (EKGIEKLKSV…NKAYVYSKKI (104 aa)). Residues 177–178 (ML), 202–203 (YF), Arg-259, Gly-281, and Gln-290 contribute to the ATP site.

Belongs to the ThiI family.

It is found in the cytoplasm. It carries out the reaction [ThiI sulfur-carrier protein]-S-sulfanyl-L-cysteine + a uridine in tRNA + 2 reduced [2Fe-2S]-[ferredoxin] + ATP + H(+) = [ThiI sulfur-carrier protein]-L-cysteine + a 4-thiouridine in tRNA + 2 oxidized [2Fe-2S]-[ferredoxin] + AMP + diphosphate. The enzyme catalyses [ThiS sulfur-carrier protein]-C-terminal Gly-Gly-AMP + S-sulfanyl-L-cysteinyl-[cysteine desulfurase] + AH2 = [ThiS sulfur-carrier protein]-C-terminal-Gly-aminoethanethioate + L-cysteinyl-[cysteine desulfurase] + A + AMP + 2 H(+). The protein operates within cofactor biosynthesis; thiamine diphosphate biosynthesis. Its function is as follows. Catalyzes the ATP-dependent transfer of a sulfur to tRNA to produce 4-thiouridine in position 8 of tRNAs, which functions as a near-UV photosensor. Also catalyzes the transfer of sulfur to the sulfur carrier protein ThiS, forming ThiS-thiocarboxylate. This is a step in the synthesis of thiazole, in the thiamine biosynthesis pathway. The sulfur is donated as persulfide by IscS. This is Probable tRNA sulfurtransferase from Clostridium kluyveri (strain NBRC 12016).